Here is a 953-residue protein sequence, read N- to C-terminus: Catenin alpha-2 (953 aa).

Thr632 bears the Phosphothreonine mark. A phosphoserine mark is found at Ser640, Ser651, and Ser901. The segment covering 912 to 927 (EKKPLVKREKPEEFQT) has biased composition (basic and acidic residues). Residues 912–939 (EKKPLVKREKPEEFQTRVRRGSQKKHIS) are disordered. Positions 928 to 938 (RVRRGSQKKHI) are enriched in basic residues. Ser939 carries the post-translational modification Phosphoserine.

This sequence belongs to the vinculin/alpha-catenin family. As to quaternary structure, interacts with CDH1 and CDH2. Interacts with ZNF639; recruits CTNNA2 to the nucleus. Interacts with F-actin. In terms of tissue distribution, expressed almost exclusively in the nervous system.

Its subcellular location is the cell membrane. It is found in the cytoplasm. The protein localises to the cytoskeleton. The protein resides in the cell junction. It localises to the adherens junction. Its subcellular location is the cell projection. It is found in the axon. The protein localises to the nucleus. In terms of biological role, may function as a linker between cadherin adhesion receptors and the cytoskeleton to regulate cell-cell adhesion and differentiation in the nervous system. Required for proper regulation of cortical neuronal migration and neurite growth. It acts as a negative regulator of Arp2/3 complex activity and Arp2/3-mediated actin polymerization. It thereby suppresses excessive actin branching which would impair neurite growth and stability. Regulates morphological plasticity of synapses and cerebellar and hippocampal lamination during development. Functions in the control of startle modulation. In Mus musculus (Mouse), this protein is Catenin alpha-2 (Ctnna2).